Reading from the N-terminus, the 703-residue chain is Hyperosmolality-gated Ca2+ permeable channel 2.3 (703 aa).

Residues 1-3 (MLL) are Extracellular-facing. The helical transmembrane segment at 4 to 26 (SALLTSVGINLGLCFLFFTLYSI) threads the bilayer. Topologically, residues 27–81 (LRKQPSNVTVYGPRLVKKDGKSQQSNEFNLERLLPTAGWVKRALEPTNDEILSNL) are cytoplasmic. A helical transmembrane segment spans residues 82 to 115 (GLDALVFIRVFVFSIRVFSFASVVGIFILLPVNY). Over 116-143 (MGTEFEEFFDLPKKSMDNFSISNVNDGS) the chain is Extracellular. The chain crosses the membrane as a helical span at residues 144 to 165 (NKLWIHFCAIYIFTAVVCSLLY). Topologically, residues 166–355 (YEHKYILTKR…TASFVRRWIS (190 aa)) are cytoplasmic. A coiled-coil region spans residues 228–300 (RTDKLKVLMN…LKQSLLAGEE (73 aa)). The chain crosses the membrane as a helical span at residues 356–382 (NVVVLVAFVALLILYIVPVVLVQGLAN). The Extracellular segment spans residues 383 to 410 (LHQLETWFPFLKGILNMKIVSQVITGYL). Residues 411 to 432 (PSLIFQLFLLIVPPIMLLLSSM) form a helical membrane-spanning segment. Over 433–436 (QGFI) the chain is Cytoplasmic. A helical membrane pass occupies residues 437–463 (SHSQIEKSACIKLLIFTVWNSFFANVL). Topologically, residues 464–489 (SGSALYRVNVFLEPKTIPRVLAAAVP) are extracellular. Residues 490–512 (AQASFFVSYVVTSGWTGLSSEIL) form a helical membrane-spanning segment. At 513 to 540 (RLVPLLWSFITKLFGKEDDKEFEVPSTP) the chain is on the cytoplasmic side. The chain crosses the membrane as a helical span at residues 541–561 (FCQEIPRILFFGLLGITYFFL). A topological domain (extracellular) is located at residue Ser562. The helical transmembrane segment at 563-586 (PLILPFLLVYYCLGYIIYRNQLLN) threads the bilayer. Topologically, residues 587–598 (VYAAKYETGGKF) are cytoplasmic. The helical transmembrane segment at 599-623 (WPIVHSYTIFSLVLMHIIAVGLFGL) threads the bilayer. Residues 624–626 (KEL) are Extracellular-facing. The helical transmembrane segment at 627 to 655 (PVASSLTIPLPVLTVLFSIYCQRRFLPNF) threads the bilayer. The Cytoplasmic segment spans residues 656–703 (KSYPTQCLVNKDKADEREQNMSEFYSELVVAYRDPALSASQDSRDISP).

Belongs to the CSC1 (TC 1.A.17) family. In terms of assembly, homodimer.

Its subcellular location is the membrane. In terms of biological role, acts as an osmosensitive calcium-permeable cation channel. This is Hyperosmolality-gated Ca2+ permeable channel 2.3 from Arabidopsis thaliana (Mouse-ear cress).